A 543-amino-acid polypeptide reads, in one-letter code: Glucose-6-phosphate isomerase (543 aa).

Glu351 functions as the Proton donor in the catalytic mechanism. Active-site residues include His382 and Lys511.

It belongs to the GPI family.

Its subcellular location is the cytoplasm. The catalysed reaction is alpha-D-glucose 6-phosphate = beta-D-fructose 6-phosphate. It participates in carbohydrate biosynthesis; gluconeogenesis. It functions in the pathway carbohydrate degradation; glycolysis; D-glyceraldehyde 3-phosphate and glycerone phosphate from D-glucose: step 2/4. Functionally, catalyzes the reversible isomerization of glucose-6-phosphate to fructose-6-phosphate. This is Glucose-6-phosphate isomerase from Hydrogenovibrio crunogenus (strain DSM 25203 / XCL-2) (Thiomicrospira crunogena).